Here is a 128-residue protein sequence, read N- to C-terminus: Iron-sulfur cluster insertion protein ErpA (128 aa).

3 residues coordinate iron-sulfur cluster: Cys-56, Cys-120, and Cys-122.

This sequence belongs to the HesB/IscA family. As to quaternary structure, homodimer. Iron-sulfur cluster is required as a cofactor.

Its function is as follows. Required for insertion of 4Fe-4S clusters for at least IspG. The chain is Iron-sulfur cluster insertion protein ErpA from Xanthomonas euvesicatoria pv. vesicatoria (strain 85-10) (Xanthomonas campestris pv. vesicatoria).